A 309-amino-acid chain; its full sequence is ATP synthase gamma chain (309 aa).

The protein belongs to the ATPase gamma chain family. F-type ATPases have 2 components, CF(1) - the catalytic core - and CF(0) - the membrane proton channel. CF(1) has five subunits: alpha(3), beta(3), gamma(1), delta(1), epsilon(1). CF(0) has three main subunits: a, b and c.

It is found in the cell membrane. Functionally, produces ATP from ADP in the presence of a proton gradient across the membrane. The gamma chain is believed to be important in regulating ATPase activity and the flow of protons through the CF(0) complex. This chain is ATP synthase gamma chain, found in Mycolicibacterium gilvum (strain PYR-GCK) (Mycobacterium gilvum (strain PYR-GCK)).